We begin with the raw amino-acid sequence, 103 residues long: Large ribosomal subunit protein uL24 (103 aa).

It belongs to the universal ribosomal protein uL24 family. As to quaternary structure, part of the 50S ribosomal subunit.

Its function is as follows. One of two assembly initiator proteins, it binds directly to the 5'-end of the 23S rRNA, where it nucleates assembly of the 50S subunit. Functionally, one of the proteins that surrounds the polypeptide exit tunnel on the outside of the subunit. The chain is Large ribosomal subunit protein uL24 from Treponema pallidum (strain Nichols).